The following is a 532-amino-acid chain: Sodium-dependent lysophosphatidylcholine symporter 1-A (532 aa).

The Cytoplasmic segment spans residues Met1–Ala40. Residues Leu41–Phe70 traverse the membrane as a helical segment. Residues Leu71–Asn81 lie on the Extracellular side of the membrane. The helical transmembrane segment at Ala82–Phe102 threads the bilayer. At Leu103–Arg114 the chain is on the cytoplasmic side. Residues Met115–Trp134 form a helical membrane-spanning segment. Topologically, residues Val135–Met144 are extracellular. A helical membrane pass occupies residues Met145–Thr169. The Cytoplasmic segment spans residues Met170 to Gln176. The helical transmembrane segment at Arg177–Ala208 threads the bilayer. Residues Asn209–His232 lie on the Extracellular side of the membrane. Cys212 and Cys464 are joined by a disulfide. 3 N-linked (GlcNAc...) asparagine glycosylation sites follow: Asn214, Asn220, and Asn229. Residues Ile233–Phe266 form a helical membrane-spanning segment. At Gly267–Pro297 the chain is on the cytoplasmic side. A helical membrane pass occupies residues Tyr298 to Lys324. Residues Tyr325–Asn335 are Extracellular-facing. Residues Ile336 to Phe354 form a helical membrane-spanning segment. The Cytoplasmic portion of the chain corresponds to Leu355–Phe358. Residues Gly359–Ser380 form a helical membrane-spanning segment. Residues Val381–Ser383 lie on the Extracellular side of the membrane. The helical transmembrane segment at Ser384 to Gln420 threads the bilayer. At Asn421–Ile430 the chain is on the cytoplasmic side. Residues Phe431 to Ala457 form a helical membrane-spanning segment. The Extracellular portion of the chain corresponds to Gly458–Ser469. The chain crosses the membrane as a helical span at residues Val470–Phe493. The Cytoplasmic segment spans residues Met494–Ala532.

It belongs to the major facilitator superfamily. Expressed in the developing nervous system.

Its subcellular location is the cell membrane. The protein resides in the endoplasmic reticulum membrane. The catalysed reaction is a 1-acyl-sn-glycero-3-phosphocholine(in) + Na(+)(in) = a 1-acyl-sn-glycero-3-phosphocholine(out) + Na(+)(out). The enzyme catalyses 1-(4Z,7Z,10Z,13Z,16Z,19Z-docosahexaenoyl)-sn-glycero-3-phosphocholine(in) + Na(+)(in) = 1-(4Z,7Z,10Z,13Z,16Z,19Z-docosahexaenoyl)-sn-glycero-3-phosphocholine(out) + Na(+)(out). It carries out the reaction 1-(9Z-octadecenoyl)-sn-glycero-3-phosphocholine(in) + Na(+)(in) = 1-(9Z-octadecenoyl)-sn-glycero-3-phosphocholine(out) + Na(+)(out). It catalyses the reaction 1-hexadecanoyl-sn-glycero-3-phosphocholine(in) + Na(+)(in) = 1-hexadecanoyl-sn-glycero-3-phosphocholine(out) + Na(+)(out). The catalysed reaction is a 1-acyl-sn-glycero-3-phosphoethanolamine(in) + Na(+)(in) = a 1-acyl-sn-glycero-3-phosphoethanolamine(out) + Na(+)(out). Its function is as follows. Sodium-dependent lysophosphatidylcholine (LPC) symporter, which plays an essential role for blood-brain barrier formation and function. Specifically expressed in endothelium of the blood-brain barrier of micro-vessels and transports LPC into the brain. Transport of LPC is essential because it constitutes the major mechanism by which docosahexaenoic acid (DHA), an omega-3 fatty acid that is essential for normal brain growth and cognitive function, enters the brain. Transports LPC carrying long-chain fatty acids such LPC oleate and LPC palmitate with a minimum acyl chain length of 14 carbons. Does not transport docosahexaenoic acid in unesterified fatty acid. The sequence is that of Sodium-dependent lysophosphatidylcholine symporter 1-A (mfsd2aa) from Danio rerio (Zebrafish).